The sequence spans 176 residues: Protein singles bar (176 aa).

A run of 4 helical transmembrane segments spans residues 13–35 (LGIR…LSRI), 71–91 (FLAT…CYAF), 111–131 (LASC…VVWL), and 140–160 (GFWA…AGIL). The region spanning 30–173 (FVLSRIGLLK…DAYLAFRHFR (144 aa)) is the MARVEL domain.

The protein localises to the membrane. Functionally, essential for myoblast fusion in developing embryos and pupae, and consequently is essential for muscle formation in adults. Required for progression past the pre-fusion complex stage of myoblast fusion. This Drosophila melanogaster (Fruit fly) protein is Protein singles bar.